Here is a 155-residue protein sequence, read N- to C-terminus: Ribonuclease H (155 aa).

Residues 1 to 143 (MNQVEIYTDG…ADALANRGVD (143 aa)) form the RNase H type-1 domain. Mg(2+)-binding residues include Asp9, Glu47, Asp69, and Asp135.

Belongs to the RNase H family. Monomer. It depends on Mg(2+) as a cofactor.

It is found in the cytoplasm. It carries out the reaction Endonucleolytic cleavage to 5'-phosphomonoester.. In terms of biological role, endonuclease that specifically degrades the RNA of RNA-DNA hybrids. This Verminephrobacter eiseniae (strain EF01-2) protein is Ribonuclease H.